The following is a 691-amino-acid chain: Elongation factor G (691 aa).

Residues Glu8–Val282 enclose the tr-type G domain. GTP contacts are provided by residues Ala17 to Thr24, Asp81 to His85, and Asn135 to Asp138.

Belongs to the TRAFAC class translation factor GTPase superfamily. Classic translation factor GTPase family. EF-G/EF-2 subfamily.

Its subcellular location is the cytoplasm. Its function is as follows. Catalyzes the GTP-dependent ribosomal translocation step during translation elongation. During this step, the ribosome changes from the pre-translocational (PRE) to the post-translocational (POST) state as the newly formed A-site-bound peptidyl-tRNA and P-site-bound deacylated tRNA move to the P and E sites, respectively. Catalyzes the coordinated movement of the two tRNA molecules, the mRNA and conformational changes in the ribosome. This chain is Elongation factor G, found in Prochlorococcus marinus (strain MIT 9312).